A 400-amino-acid polypeptide reads, in one-letter code: Formate-dependent phosphoribosylglycinamide formyltransferase (400 aa).

N(1)-(5-phospho-beta-D-ribosyl)glycinamide-binding positions include 22–23 (EL) and glutamate 82. ATP contacts are provided by residues arginine 114, lysine 155, 160–165 (SSGKGQ), 195–198 (EGFV), and glutamate 203. The region spanning 119–308 (RLAAEELGLS…EFALHARALL (190 aa)) is the ATP-grasp domain. Mg(2+) contacts are provided by glutamate 267 and glutamate 279. Residues aspartate 286, lysine 356, and 363-364 (RR) each bind N(1)-(5-phospho-beta-D-ribosyl)glycinamide.

The protein belongs to the PurK/PurT family. Homodimer.

It catalyses the reaction N(1)-(5-phospho-beta-D-ribosyl)glycinamide + formate + ATP = N(2)-formyl-N(1)-(5-phospho-beta-D-ribosyl)glycinamide + ADP + phosphate + H(+). The protein operates within purine metabolism; IMP biosynthesis via de novo pathway; N(2)-formyl-N(1)-(5-phospho-D-ribosyl)glycinamide from N(1)-(5-phospho-D-ribosyl)glycinamide (formate route): step 1/1. Functionally, involved in the de novo purine biosynthesis. Catalyzes the transfer of formate to 5-phospho-ribosyl-glycinamide (GAR), producing 5-phospho-ribosyl-N-formylglycinamide (FGAR). Formate is provided by PurU via hydrolysis of 10-formyl-tetrahydrofolate. The chain is Formate-dependent phosphoribosylglycinamide formyltransferase from Hahella chejuensis (strain KCTC 2396).